We begin with the raw amino-acid sequence, 375 residues long: Lipid-A-disaccharide synthase (375 aa).

Belongs to the LpxB family.

It carries out the reaction a lipid X + a UDP-2-N,3-O-bis[(3R)-3-hydroxyacyl]-alpha-D-glucosamine = a lipid A disaccharide + UDP + H(+). It participates in bacterial outer membrane biogenesis; LPS lipid A biosynthesis. Its function is as follows. Condensation of UDP-2,3-diacylglucosamine and 2,3-diacylglucosamine-1-phosphate to form lipid A disaccharide, a precursor of lipid A, a phosphorylated glycolipid that anchors the lipopolysaccharide to the outer membrane of the cell. The polypeptide is Lipid-A-disaccharide synthase (Pseudomonas putida (strain W619)).